We begin with the raw amino-acid sequence, 640 residues long: Threonine--tRNA ligase (640 aa).

The region spanning 1–61 is the TGS domain; sequence MPTITLPDGS…THDATLQIIT (61 aa). The interval 242 to 533 is catalytic; the sequence is DHRKIGKQLD…LIEHYAGVFP (292 aa). Residues cysteine 333, histidine 384, and histidine 510 each contribute to the Zn(2+) site.

This sequence belongs to the class-II aminoacyl-tRNA synthetase family. As to quaternary structure, homodimer. The cofactor is Zn(2+).

It localises to the cytoplasm. It carries out the reaction tRNA(Thr) + L-threonine + ATP = L-threonyl-tRNA(Thr) + AMP + diphosphate + H(+). Catalyzes the attachment of threonine to tRNA(Thr) in a two-step reaction: L-threonine is first activated by ATP to form Thr-AMP and then transferred to the acceptor end of tRNA(Thr). Also edits incorrectly charged L-seryl-tRNA(Thr). This Pseudomonas putida (strain W619) protein is Threonine--tRNA ligase.